A 332-amino-acid polypeptide reads, in one-letter code: Biotin synthase (332 aa).

Positions 53-282 (YFGKKVKLNM…TKEIRISGGR (230 aa)) constitute a Radical SAM core domain. [4Fe-4S] cluster contacts are provided by C71, C75, and C78. [2Fe-2S] cluster-binding residues include C115, C147, C207, and R277.

It belongs to the radical SAM superfamily. Biotin synthase family. Homodimer. [4Fe-4S] cluster serves as cofactor. The cofactor is [2Fe-2S] cluster.

The enzyme catalyses (4R,5S)-dethiobiotin + (sulfur carrier)-SH + 2 reduced [2Fe-2S]-[ferredoxin] + 2 S-adenosyl-L-methionine = (sulfur carrier)-H + biotin + 2 5'-deoxyadenosine + 2 L-methionine + 2 oxidized [2Fe-2S]-[ferredoxin]. It functions in the pathway cofactor biosynthesis; biotin biosynthesis; biotin from 7,8-diaminononanoate: step 2/2. Its function is as follows. Catalyzes the conversion of dethiobiotin (DTB) to biotin by the insertion of a sulfur atom into dethiobiotin via a radical-based mechanism. The polypeptide is Biotin synthase (Bacillus anthracis).